The chain runs to 193 residues: Ion-translocating oxidoreductase complex subunit A (193 aa).

Helical transmembrane passes span 5–25 (LLLF…FLGL), 39–59 (IGMG…AWMV), 62–82 (FILL…LVIA), 102–122 (LLGI…VALL), 134–154 (AVYG…FAAI), and 171–191 (SIAL…TGLV).

The protein belongs to the NqrDE/RnfAE family. The complex is composed of six subunits: RnfA, RnfB, RnfC, RnfD, RnfE and RnfG.

The protein resides in the cell inner membrane. In terms of biological role, part of a membrane-bound complex that couples electron transfer with translocation of ions across the membrane. This chain is Ion-translocating oxidoreductase complex subunit A, found in Yersinia enterocolitica serotype O:8 / biotype 1B (strain NCTC 13174 / 8081).